Here is a 217-residue protein sequence, read N- to C-terminus: UPF0502 protein VF_A0604 (217 aa).

Belongs to the UPF0502 family.

This is UPF0502 protein VF_A0604 from Aliivibrio fischeri (strain ATCC 700601 / ES114) (Vibrio fischeri).